The chain runs to 95 residues: Acylphosphatase (95 aa).

Residues 7–94 (AALVRITGRV…EAPAGFRITR (88 aa)) enclose the Acylphosphatase-like domain. Active-site residues include R22 and N40. Residues 76–88 (VASEEASSAEAPA) show a composition bias toward low complexity. Residues 76 to 95 (VASEEASSAEAPAGFRITRG) form a disordered region.

Belongs to the acylphosphatase family.

The enzyme catalyses an acyl phosphate + H2O = a carboxylate + phosphate + H(+). The chain is Acylphosphatase (acyP) from Rhizobium meliloti (strain 1021) (Ensifer meliloti).